A 351-amino-acid polypeptide reads, in one-letter code: MVQFNGPHGKVTVSYLRQGGLNPPAPAPKGSFTGKTVLITGCSSGIGYQAALQIASLNPKRLILGTRTLAKGEAAKQEILATVGPSLDSSIIEVIPIECSDLSSVRQFTTTVRKTTPPGTLDCVLLSAGLALPTREVVTDESGHEWPTTFVVNVLAPALLALEFLPLLQSTPGSVVESVNSISYCNVTSEDISPLLSSQDEATGTTSALDFFNNPERWTTQRAYYEAKLMLMFVLEGLVQDQAQQQASQPGEDRKVLFLACCPGQCRTNLYRQFGLGVRAFMTLFNAVIARTAEQGARTLVTGLLLQGEEAMGKMWVNDRFDDWSPGITEEEWKVLQKRVWEEIKGVLGKA.

Residues Ile46, Thr66, Glu98, Tyr224, Lys228, and Thr268 each coordinate NADP(+). The Proton donor role is filled by Tyr224. The active-site Lowers pKa of active site Tyr is the Lys228.

The protein belongs to the short-chain dehydrogenases/reductases (SDR) family.

The protein operates within antibiotic biosynthesis. Short-chain dehydrogenase; part of the gene cluster that mediates the biosynthesis of sordarin and hypoxysordarin, glycoside antibiotics with a unique tetracyclic diterpene aglycone structure. First, the geranylgeranyl diphosphate synthase sdnC constructs GGDP from farnesyl diphosphate and isopentenyl diphosphate. The diterpene cyclase sdnA then catalyzes the cyclization of GGDP to afford cycloaraneosene. Cycloaraneosene is then hydroxylated four times by the putative cytochrome P450 monooxygenases sdnB, sdnE, sdnF and sdnH to give a hydroxylated cycloaraneosene derivative such as cycloaraneosene-8,9,13,19-tetraol. Although the order of the hydroxylations is unclear, at least C8, C9 and C13 of the cycloaraneosene skeleton are hydroxylated before the sordaricin formation. Dehydration of the 13-hydroxy group of the hydroxylated cycloaraneosene derivative might be catalyzed by an unassigned hypothetical protein such as sdnG and sdnP to construct the cyclopentadiene moiety. The FAD-dependent oxidoreductase sdnN is proposed to catalyze the oxidation at C9 of the hydroxylated cycloaraneosene derivative and also catalyze the Baeyer-Villiger oxidation to give the lactone intermediate. The presumed lactone intermediate would be hydrolyzed to give an acrolein moiety and a carboxylate moiety. Then, [4+2]cycloaddition would occur between the acrolein moiety and the cyclopentadiene moiety to give sordaricin. SdnN might also be involved in the [4+2]cycloaddition after the hypothesized oxidation to accommodate the oxidized product and prompt the [4+2]cycloaddition. GDP-6-deoxy-D-altrose may be biosynthesized from GDP-D-mannose by the putative GDP-mannose-4,6-dehydratase sdnI and the short-chain dehydrogenase sdnK. The glycosyltransferase sdnJ catalyzes the attachment of 6-deoxy-D-altrose onto the 19-hydroxy group of sordaricin to give 4'-O-demethylsordarin. The methyltransferase sdnD would complete the biosynthesis of sordarin. Sordarin can be further modified into hypoxysordarin. The unique acyl chain at the 3'-hydroxy group of hypoxysordarin would be constructed by an iterative type I PKS sdnO and the trans-acting polyketide methyltransferase sdnL. SdnL would be responsible for the introduction of an alpha-methyl group of the polyketide chain. Alternatively, the beta-lactamase-like protein sdnR might be responsible for the cleavage and transfer of the polyketide chain from the PKS sdnO to sordarin. Two putative cytochrome P450 monooxygenases, sdnQ and sdnT, might catalyze the epoxidations of the polyketide chain to complete the biosynthesis of hypoxysordarin. Transcriptional regulators sdnM and sdnS are presumably encoded for the transcriptional regulation of the expression of the sdn gene cluster. The sequence is that of Short-chain dehydrogenase sdnK from Sordaria araneosa (Pleurage araneosa).